Here is a 394-residue protein sequence, read N- to C-terminus: MNKKSIRDVEVKGKKVFVRVDFNVPLNENREITDDTRIRAALPTLQYLREQGAKLIVASHLGRPKGQFNEKYSLKPVAKRLAELLGIEVKMAPDVVGPEVEKMAGELRPGEVLLLENVRFYPEEEKNDPEFARKLARLAEIFVSDAFGAAHRAHASTAGIASYLPAVAGFLMEKEINFLSRALNNPERPFVAIIGGAKVSDKIGVIENLLGKVDVLLIGGGMANTFLKAMGYETGKSLVEEDKVNLAGELMNKAKEVGVKLLLPSDVVVAPRIEAGVPSKIVAVDSIPAEEMALDIGEKTAKHFREEILKAKTVVWNGPMGVFEVEPFDRGTVAVAEAVAESGALSVVGGGDSVAAVEKAGVADKITHISTGGGASLEFLEGKKLPGVEVLNDK.

Substrate is bound by residues 21–23, R37, 60–63, R119, and R152; these read DFN and HLGR. Residues K202, E324, and 350–353 contribute to the ATP site; that span reads GGDS.

It belongs to the phosphoglycerate kinase family. Monomer.

It localises to the cytoplasm. It catalyses the reaction (2R)-3-phosphoglycerate + ATP = (2R)-3-phospho-glyceroyl phosphate + ADP. The protein operates within carbohydrate degradation; glycolysis; pyruvate from D-glyceraldehyde 3-phosphate: step 2/5. This Carboxydothermus hydrogenoformans (strain ATCC BAA-161 / DSM 6008 / Z-2901) protein is Phosphoglycerate kinase.